A 68-amino-acid polypeptide reads, in one-letter code: UPF0435 protein SAB1812c (68 aa).

The protein belongs to the UPF0435 family.

This Staphylococcus aureus (strain bovine RF122 / ET3-1) protein is UPF0435 protein SAB1812c.